The following is a 383-amino-acid chain: Queuine tRNA-ribosyltransferase (383 aa).

Asp92 acts as the Proton acceptor in catalysis. Substrate is bound by residues 92 to 96, Asp146, Gln190, and Gly217; that span reads DSGGF. Residues 248-254 form an RNA binding region; sequence GVGKPED. Residue Asp267 is the Nucleophile of the active site. The interval 272-276 is RNA binding; important for wobble base 34 recognition; that stretch reads TRNAR. Zn(2+)-binding residues include Cys310, Cys312, Cys315, and His341.

It belongs to the queuine tRNA-ribosyltransferase family. Homodimer. Within each dimer, one monomer is responsible for RNA recognition and catalysis, while the other monomer binds to the replacement base PreQ1. Requires Zn(2+) as cofactor.

The catalysed reaction is 7-aminomethyl-7-carbaguanine + guanosine(34) in tRNA = 7-aminomethyl-7-carbaguanosine(34) in tRNA + guanine. Its pathway is tRNA modification; tRNA-queuosine biosynthesis. In terms of biological role, catalyzes the base-exchange of a guanine (G) residue with the queuine precursor 7-aminomethyl-7-deazaguanine (PreQ1) at position 34 (anticodon wobble position) in tRNAs with GU(N) anticodons (tRNA-Asp, -Asn, -His and -Tyr). Catalysis occurs through a double-displacement mechanism. The nucleophile active site attacks the C1' of nucleotide 34 to detach the guanine base from the RNA, forming a covalent enzyme-RNA intermediate. The proton acceptor active site deprotonates the incoming PreQ1, allowing a nucleophilic attack on the C1' of the ribose to form the product. After dissociation, two additional enzymatic reactions on the tRNA convert PreQ1 to queuine (Q), resulting in the hypermodified nucleoside queuosine (7-(((4,5-cis-dihydroxy-2-cyclopenten-1-yl)amino)methyl)-7-deazaguanosine). The sequence is that of Queuine tRNA-ribosyltransferase from Psychrobacter sp. (strain PRwf-1).